The primary structure comprises 444 residues: Tubulin beta 8B (444 aa).

The MREI motif motif lies at 1–4; it reads MREI. Positions 11, 69, 138, 142, 143, and 144 each coordinate GTP. A Mg(2+)-binding site is contributed by E69. S172 carries the post-translational modification Phosphoserine; by CDK1. The GTP site is built by N204 and N226. The interval 421–444 is disordered; that stretch reads EYQQYQDATAEEEEDEEYAEEEVA. The segment covering 429–444 has biased composition (acidic residues); it reads TAEEEEDEEYAEEEVA. Position 436 is a 5-glutamyl polyglutamate (E436).

It belongs to the tubulin family. Dimer of alpha and beta chains. A typical microtubule is a hollow water-filled tube with an outer diameter of 25 nm and an inner diameter of 15 nM. Alpha-beta heterodimers associate head-to-tail to form protofilaments running lengthwise along the microtubule wall with the beta-tubulin subunit facing the microtubule plus end conferring a structural polarity. Microtubules usually have 13 protofilaments but different protofilament numbers can be found in some organisms and specialized cells. Mg(2+) serves as cofactor. In terms of processing, some glutamate residues at the C-terminus are polyglutamylated, resulting in polyglutamate chains on the gamma-carboxyl group. Polyglutamylation plays a key role in microtubule severing by spastin (SPAST). SPAST preferentially recognizes and acts on microtubules decorated with short polyglutamate tails: severing activity by SPAST increases as the number of glutamates per tubulin rises from one to eight, but decreases beyond this glutamylation threshold. Glutamylation is also involved in cilia motility. Post-translationally, some glutamate residues at the C-terminus are monoglycylated but not polyglycylated due to the absence of functional TTLL10 in human. Monoglycylation is mainly limited to tubulin incorporated into cilia and flagella axonemes, which is required for their stability and maintenance. Flagella glycylation controls sperm motility. Both polyglutamylation and monoglycylation can coexist on the same protein on adjacent residues, and lowering glycylation levels increases polyglutamylation, and reciprocally. Phosphorylated on Ser-172 by CDK1 during the cell cycle, from metaphase to telophase, but not in interphase. This phosphorylation inhibits tubulin incorporation into microtubules.

The protein localises to the cytoplasm. It localises to the cytoskeleton. Its function is as follows. Tubulin is the major constituent of microtubules, a cylinder consisting of laterally associated linear protofilaments composed of alpha- and beta-tubulin heterodimers. Microtubules grow by the addition of GTP-tubulin dimers to the microtubule end, where a stabilizing cap forms. Below the cap, tubulin dimers are in GDP-bound state, owing to GTPase activity of alpha-tubulin. In Homo sapiens (Human), this protein is Tubulin beta 8B.